Reading from the N-terminus, the 222-residue chain is Triosephosphate isomerase (222 aa).

Substrate is bound at residue 9–11 (NLK). His-93 serves as the catalytic Electrophile. Residue Glu-141 is the Proton acceptor of the active site. Substrate is bound by residues Ile-146, Gly-181, and 202–203 (AS).

The protein belongs to the triosephosphate isomerase family. As to quaternary structure, homotetramer; dimer of dimers.

It localises to the cytoplasm. The enzyme catalyses D-glyceraldehyde 3-phosphate = dihydroxyacetone phosphate. The protein operates within carbohydrate biosynthesis; gluconeogenesis. It functions in the pathway carbohydrate degradation; glycolysis; D-glyceraldehyde 3-phosphate from glycerone phosphate: step 1/1. In terms of biological role, involved in the gluconeogenesis. Catalyzes stereospecifically the conversion of dihydroxyacetone phosphate (DHAP) to D-glyceraldehyde-3-phosphate (G3P). The polypeptide is Triosephosphate isomerase (Methanoculleus marisnigri (strain ATCC 35101 / DSM 1498 / JR1)).